The sequence spans 342 residues: Autoinducer 2 import system permease protein LsrC (342 aa).

The Periplasmic portion of the chain corresponds to Met1–Ala13. Residues Leu14–Val34 traverse the membrane as a helical segment. Topologically, residues Gln35–Thr38 are cytoplasmic. The helical transmembrane segment at Met39 to Leu59 threads the bilayer. The Periplasmic portion of the chain corresponds to Thr60–Ser69. Residues Ile70–Val90 traverse the membrane as a helical segment. Over Ala91–Cys92 the chain is Cytoplasmic. Residues Val93–Leu113 form a helical membrane-spanning segment. Position 114 (Lys114) is a topological domain, periplasmic. The chain crosses the membrane as a helical span at residues Ile115 to Trp135. Topologically, residues Thr136–Pro154 are cytoplasmic. A helical transmembrane segment spans residues Leu155–Trp175. Over Leu176–Ser212 the chain is Periplasmic. Residues Leu213–Pro233 traverse the membrane as a helical segment. Over Asn234–Gly251 the chain is Cytoplasmic. Residues Gly252–Leu272 form a helical membrane-spanning segment. Over Thr273 to Arg283 the chain is Periplasmic. The chain crosses the membrane as a helical span at residues Ile284–Asp304. Over Gly305–Ala342 the chain is Cytoplasmic.

The protein belongs to the binding-protein-dependent transport system permease family. AraH/RbsC subfamily. In terms of assembly, the complex is composed of two ATP-binding proteins (LsrA), two transmembrane proteins (LsrC and LsrD) and a solute-binding protein (LsrB).

It localises to the cell inner membrane. Part of the ABC transporter complex LsrABCD involved in autoinducer 2 (AI-2) import. Probably responsible for the translocation of the substrate across the membrane. This chain is Autoinducer 2 import system permease protein LsrC (lsrC), found in Escherichia coli (strain K12 / DH10B).